We begin with the raw amino-acid sequence, 165 residues long: V-type proton ATPase 16 kDa proteolipid subunit (165 aa).

The Lumenal portion of the chain corresponds to 1 to 12; that stretch reads MSTVFNGDETAP. Residues 13-33 traverse the membrane as a helical segment; the sequence is FFGFLGAAAALVFSCMGAAYG. The Cytoplasmic portion of the chain corresponds to 34-55; it reads TAKSGVGVASMGVMRPELVMKS. The helical transmembrane segment at 56–76 threads the bilayer; the sequence is IVPVVMAGVLGIYGLIIAVII. Over 77–95 the chain is Lumenal; it reads STGINPKAKSYYLFDGYAH. The chain crosses the membrane as a helical span at residues 96–117; that stretch reads LSSGLACGLAGLSAGMAIGIVG. At 118 to 129 the chain is on the cytoplasmic side; that stretch reads DAGVRANAQQPK. A helical membrane pass occupies residues 130–155; that stretch reads LFVGMILILIFAEALALYGLIVGIIL. Residues 156 to 165 lie on the Lumenal side of the membrane; that stretch reads SSRAGQSRAD.

Belongs to the V-ATPase proteolipid subunit family. V-ATPase is a heteromultimeric enzyme composed of a peripheral catalytic V1 complex (main components: subunits A, B, C, D, E, and F) attached to an integral membrane V0 proton pore complex (main component: the proteolipid protein; which is present as a hexamer that forms the proton-conducting pore).

It localises to the vacuole membrane. Its function is as follows. Proton-conducting pore forming subunit of the membrane integral V0 complex of vacuolar ATPase. V-ATPase is responsible for acidifying a variety of intracellular compartments in eukaryotic cells. The polypeptide is V-type proton ATPase 16 kDa proteolipid subunit (VMAC1) (Mesembryanthemum crystallinum (Common ice plant)).